The following is a 390-amino-acid chain: Neutrophil cytosol factor 1 (390 aa).

The region spanning 4-125 is the PX domain; it reads TFIRHIALLG…DFFKVRPDDL (122 aa). 2 SH3 domains span residues 156-215 and 226-285; these read IILQ…PLDS and YAGE…KAGE. The segment at 291–390 is disordered; the sequence is QRQIRGRGAP…STKRKLTSAV (100 aa). Residues Ser-304, Ser-321, Ser-329, and Ser-346 each carry the phosphoserine modification. Positions 374-383 are enriched in basic and acidic residues; it reads ILHRCTESTK.

As to quaternary structure, component of the phagocyte NADPH oxidase complex composed of an obligatory core heterodimer formed by the membrane proteins CYBA and CYBB and the cytosolic regulatory subunits NCF1/p47-phox, NCF2/p67-phox, NCF4/p40-phox and the small GTPase RAC1 or RAC2. Part of a cytosolic complex composed at least by NCF1, NCF2 and NCF4. Interacts (via C-terminus) with NCF2 (via the C-terminal SH3 domain). Interacts with NCF4. Interacts with CYBB. Interacts (via the second SH3 domain) with CYBA; interaction is phosphorylation-dependent. Interacts with NOXA1. Interacts with ADAM15. Interacts with TRAF4. Interacts with FASLG. Interacts with PARK7 (via C-terminus); the interaction is enhanced by LPS and modulates NCF1 phosphorylation and membrane translocation. In terms of processing, phosphorylated by PRKCD; phosphorylation induces activation of NCF1, leading to assembly and activation of the NADPH oxidase complex.

It localises to the cytoplasm. The protein resides in the cytosol. Its subcellular location is the membrane. Subunit of the phagocyte NADPH oxidase complex that mediates the transfer of electrons from cytosolic NADPH to O2 to produce the superoxide anion (O2(-)). In the activated complex, electrons are first transferred from NADPH to flavin adenine dinucleotide (FAD) and subsequently transferred via two heme molecules to molecular oxygen, producing superoxide through an outer-sphere reaction. Activation of the NADPH oxidase complex is initiated by the assembly of cytosolic subunits of the NADPH oxidase complex with the core NADPH oxidase complex to form a complex at the plasma membrane or phagosomal membrane. This activation process is initiated by phosphorylation dependent binding of the cytosolic NCF1/p47-phox subunit to the C-terminus of CYBA/p22-phox. This is Neutrophil cytosol factor 1 from Mus musculus (Mouse).